The following is a 522-amino-acid chain: MKNLNRILLSIKFMNKYFTYLIAIISGLLGVFAFSPFDYWPLAYVSLLGLLYVAKNPKKSTALLSTFLWAMGFFCFGVSWLNVSIHQFGGASLGVSYFLVGLLAAYLALYPMLFTYLVHHFKVQSAVIFAVIWTLTEFLRGWIFTGFPWLQFGYTQIDSPFYGIAPIFGVTGLTFFTVWASAVIFNLVSSLFKTKNLKLVLANALLLIIVGGLSAYSSRIHFVKSVEDKAISVTLAQGNIEQNLKWDPNYFYSTLAIYQKLITENLGKTDLIILPESALPTLENAITPFFEGLERAAKETKTEIMVGTVFQDTKSGKLLNSIMTAGNPDFPYQPNTQNRYNKHHLVPFGEYVPLESILRPLNSVFNLPMSAFQSGEAVQPSLIAKKRAFSPAICYEIIFGEQVRQNLKQDTDYLLTLSNDAWFGDSIGPWQHLQMARMRALELGKPLIRATNTGISVFVDAQGKVLAQAPQFIETTLTYKIAPAEGKTPYSVLGNMPLYALSLLFLLLHSMMAFIRRKMNIL.

6 helical membrane passes run 17 to 37 (YFTY…FSPF), 61 to 81 (TALL…VSWL), 98 to 118 (FLVG…TYLV), 127 to 147 (VIFA…FTGF), 164 to 184 (IAPI…SAVI), and 197 to 217 (LKLV…SAYS). A CN hydrolase domain is found at 236–483 (AQGNIEQNLK…ETTLTYKIAP (248 aa)). Glu276 functions as the Proton acceptor in the catalytic mechanism. Lys342 is a catalytic residue. Cys394 functions as the Nucleophile in the catalytic mechanism. The helical transmembrane segment at 495-515 (NMPLYALSLLFLLLHSMMAFI) threads the bilayer.

The protein belongs to the CN hydrolase family. Apolipoprotein N-acyltransferase subfamily.

The protein resides in the cell inner membrane. It catalyses the reaction N-terminal S-1,2-diacyl-sn-glyceryl-L-cysteinyl-[lipoprotein] + a glycerophospholipid = N-acyl-S-1,2-diacyl-sn-glyceryl-L-cysteinyl-[lipoprotein] + a 2-acyl-sn-glycero-3-phospholipid + H(+). The protein operates within protein modification; lipoprotein biosynthesis (N-acyl transfer). Its function is as follows. Catalyzes the phospholipid dependent N-acylation of the N-terminal cysteine of apolipoprotein, the last step in lipoprotein maturation. The chain is Apolipoprotein N-acyltransferase from Haemophilus influenzae (strain ATCC 51907 / DSM 11121 / KW20 / Rd).